Here is a 682-residue protein sequence, read N- to C-terminus: Amphiphysin (682 aa).

Coiled-coil stretches lie at residues 10–84 and 144–191; these read AKNV…LHEV and DYDS…QEEL. Residues 24–240 form the BAR domain; that stretch reads VLQKLGKADE…MTKLGDQHAD (217 aa). Disordered stretches follow at residues 244 to 310, 446 to 470, 501 to 530, and 561 to 606; these read TIQG…PKLT, ILAEPDEPTEQAAESIEAGDKETTG, GAVRTEQEAAAEGDKPQGEEKDVDVSQEKV, and AAAE…ASDM. Pro residues predominate over residues 261 to 274; the sequence is PSPPEEVSPLPSPT. Basic and acidic residues predominate over residues 503 to 527; that stretch reads VRTEQEAAAEGDKPQGEEKDVDVSQ. A compositionally biased stretch (polar residues) spans 567–596; that stretch reads TQGTDSETSQIGSEQKATEEIQTTPSQDQP. The SH3 domain occupies 609-682; that stretch reads GFLFKVEVLH…FPENFTRHLE (74 aa).

As to quaternary structure, heterodimer with BIN1. Binds SH3GLB1. Is abundant in the forebrain and cerebellum. It is also found in the adrenal gland, anterior and posterior pituitary.

It is found in the cytoplasmic vesicle. The protein localises to the secretory vesicle. Its subcellular location is the synaptic vesicle membrane. The protein resides in the cytoplasm. It localises to the cytoskeleton. May participate in mechanisms of regulated exocytosis in synapses and certain endocrine cell types. May control the properties of the membrane associated cytoskeleton. The chain is Amphiphysin (AMPH) from Gallus gallus (Chicken).